The following is a 200-amino-acid chain: UPF0301 protein BR0480/BS1330_I0481 (200 aa).

This sequence belongs to the UPF0301 (AlgH) family.

The polypeptide is UPF0301 protein BR0480/BS1330_I0481 (Brucella suis biovar 1 (strain 1330)).